The chain runs to 428 residues: Light-independent protochlorophyllide reductase subunit N (428 aa).

[4Fe-4S] cluster contacts are provided by Cys16, Cys41, and Cys102.

It belongs to the BchN/ChlN family. As to quaternary structure, protochlorophyllide reductase is composed of three subunits; ChlL, ChlN and ChlB. Forms a heterotetramer of two ChlB and two ChlN subunits. [4Fe-4S] cluster is required as a cofactor.

It catalyses the reaction chlorophyllide a + oxidized 2[4Fe-4S]-[ferredoxin] + 2 ADP + 2 phosphate = protochlorophyllide a + reduced 2[4Fe-4S]-[ferredoxin] + 2 ATP + 2 H2O. It participates in porphyrin-containing compound metabolism; chlorophyll biosynthesis (light-independent). Component of the dark-operative protochlorophyllide reductase (DPOR) that uses Mg-ATP and reduced ferredoxin to reduce ring D of protochlorophyllide (Pchlide) to form chlorophyllide a (Chlide). This reaction is light-independent. The NB-protein (ChlN-ChlB) is the catalytic component of the complex. The polypeptide is Light-independent protochlorophyllide reductase subunit N (Synechococcus sp. (strain CC9311)).